The primary structure comprises 565 residues: Atlastin-2 (565 aa).

Residues 1–458 (MVLKKGVKFF…NIFYAARTPA (458 aa)) lie on the Cytoplasmic side of the membrane. One can recognise a GB1/RHD3-type G domain in the interval 73-318 (DLNIVVVSVA…LVPLLLAPEN (246 aa)). Residues R86, K87, G88, K89, S90, F91, Q157, R226, and D227 each contribute to the GDP site. 6 residues coordinate GTP: R86, K87, G88, K89, S90, and F91. S90 provides a ligand contact to Mg(2+). The GTP site is built by R226 and D227. A coiled-coil region spans residues 238 to 266 (LEGGKQFLEKRLQVKKNQHEELQNVRKHI). An N6-methyllysine modification is found at K252. 2 residues coordinate GDP: V285 and N288. Residue V285 participates in GTP binding. The 3HB (three-helix bundle) domain stretch occupies residues 356-447 (MLQATAEANN…YANFIKHNDG (92 aa)). Residues 448 to 456 (KNIFYAART) are linker. Residues 459–479 (TLFAVMFAMYIISGLTGFIGL) traverse the membrane as a helical segment. Residues 480–481 (NS) lie on the Lumenal side of the membrane. A helical membrane pass occupies residues 482–502 (IAVLCNLVMGLALTFLCTWAY). Topologically, residues 503–565 (VKYSGEFREI…VSHHARLKTD (63 aa)) are cytoplasmic. The autoinhibitory domain stretch occupies residues 529 to 565 (KPLGDNLMEENIRQSVTNSIKAGLTDQVSHHARLKTD).

Belongs to the TRAFAC class dynamin-like GTPase superfamily. GB1/RHD3 GTPase family. GB1 subfamily. Monomeric and homodimeric. The homodimer, transiently formed by two molecules on opposing membranes, is the active form mediating ER membrane fusion. Interacts with REEP5 and RTN3; these proteins are involved in endoplasmic reticulum tubular network organization. Interacts with ZFYVE27; both proteins are involved in endoplasmic reticulum tubular network organization.

It is found in the endoplasmic reticulum membrane. The catalysed reaction is GTP + H2O = GDP + phosphate + H(+). Functionally, atlastin-2 (ATL2) is a membrane-anchored GTPase that mediates the GTP-dependent fusion of endoplasmic reticulum (ER) membranes, maintaining the continuous ER network. It facilitates the formation of three-way junctions where ER tubules intersect. Two atlastin-2 on neighboring ER tubules bind GTP and form loose homodimers through the GB1/RHD3-type G domains and 3HB regions. Upon GTP hydrolysis, the 3HB regions tighten, pulling the membranes together to drive their fusion. After fusion, the homodimer disassembles upon release of inorganic phosphate (Pi). Subsequently, GDP dissociates, resetting the monomers to a conformation ready for a new fusion cycle. In Macaca fascicularis (Crab-eating macaque), this protein is Atlastin-2.